A 283-amino-acid chain; its full sequence is Thymidylate synthase (283 aa).

Arg-22 is a binding site for dUMP. Cys-160 (nucleophile) is an active-site residue. DUMP is bound by residues 180 to 183, Asn-191, and 221 to 223; these read RSCD and HIY. Asp-183 is a (6R)-5,10-methylene-5,6,7,8-tetrahydrofolate binding site. Ser-282 provides a ligand contact to (6R)-5,10-methylene-5,6,7,8-tetrahydrofolate.

It belongs to the thymidylate synthase family. Bacterial-type ThyA subfamily. Homodimer.

Its subcellular location is the cytoplasm. It carries out the reaction dUMP + (6R)-5,10-methylene-5,6,7,8-tetrahydrofolate = 7,8-dihydrofolate + dTMP. It functions in the pathway pyrimidine metabolism; dTTP biosynthesis. Catalyzes the reductive methylation of 2'-deoxyuridine-5'-monophosphate (dUMP) to 2'-deoxythymidine-5'-monophosphate (dTMP) while utilizing 5,10-methylenetetrahydrofolate (mTHF) as the methyl donor and reductant in the reaction, yielding dihydrofolate (DHF) as a by-product. This enzymatic reaction provides an intracellular de novo source of dTMP, an essential precursor for DNA biosynthesis. The polypeptide is Thymidylate synthase (Haemophilus influenzae (strain 86-028NP)).